We begin with the raw amino-acid sequence, 307 residues long: Aspartate carbamoyltransferase catalytic subunit (307 aa).

Residues R55 and T56 each contribute to the carbamoyl phosphate site. K85 lines the L-aspartate pocket. 3 residues coordinate carbamoyl phosphate: R106, H134, and Q137. L-aspartate contacts are provided by R167 and R228. Carbamoyl phosphate contacts are provided by L266 and P267.

It belongs to the aspartate/ornithine carbamoyltransferase superfamily. ATCase family. In terms of assembly, heterododecamer (2C3:3R2) of six catalytic PyrB chains organized as two trimers (C3), and six regulatory PyrI chains organized as three dimers (R2).

It carries out the reaction carbamoyl phosphate + L-aspartate = N-carbamoyl-L-aspartate + phosphate + H(+). Its pathway is pyrimidine metabolism; UMP biosynthesis via de novo pathway; (S)-dihydroorotate from bicarbonate: step 2/3. Functionally, catalyzes the condensation of carbamoyl phosphate and aspartate to form carbamoyl aspartate and inorganic phosphate, the committed step in the de novo pyrimidine nucleotide biosynthesis pathway. The protein is Aspartate carbamoyltransferase catalytic subunit of Tolumonas auensis (strain DSM 9187 / NBRC 110442 / TA 4).